The sequence spans 443 residues: Chromosomal replication initiator protein DnaA (443 aa).

The domain I, interacts with DnaA modulators stretch occupies residues 1 to 67; sequence MDAWSRSLER…RELLAHFAGF (67 aa). The tract at residues 67–105 is domain II; sequence FSDVFLEIGSRPRPVEAQNAPVSTPSAHVSSEPQVPFAG. The interval 106 to 323 is domain III, AAA+ region; that stretch reads NLDNHYTFAN…GALNTLTARA (218 aa). Residues glycine 151, glycine 153, lysine 154, and threonine 155 each coordinate ATP. The domain IV, binds dsDNA stretch occupies residues 324 to 443; it reads NFTGRAITTE…WDKLIRKLSE (120 aa).

Belongs to the DnaA family. In terms of assembly, oligomerizes as a right-handed, spiral filament on DNA at oriC.

It localises to the cytoplasm. Its function is as follows. Plays an essential role in the initiation and regulation of chromosomal replication. ATP-DnaA binds to the origin of replication (oriC) to initiate formation of the DNA replication initiation complex once per cell cycle. Binds the DnaA box (a 9 base pair repeat at the origin) and separates the double-stranded (ds)DNA. Forms a right-handed helical filament on oriC DNA; dsDNA binds to the exterior of the filament while single-stranded (ss)DNA is stabiized in the filament's interior. The ATP-DnaA-oriC complex binds and stabilizes one strand of the AT-rich DNA unwinding element (DUE), permitting loading of DNA polymerase. After initiation quickly degrades to an ADP-DnaA complex that is not apt for DNA replication. Binds acidic phospholipids. The chain is Chromosomal replication initiator protein DnaA from Stenotrophomonas maltophilia (strain K279a).